The following is a 609-amino-acid chain: COP9 signalosome complex subunit 5 (609 aa).

The MPN domain occupies 75–215 (CYISSLALMK…IGAFRTYPEG (141 aa)). Positions 161, 163, and 174 each coordinate Zn(2+). Positions 161-174 (HSHPGYGCWLSGID) match the JAMM motif motif. Disordered regions lie at residues 210-248 (RTYP…LPKS) and 381-456 (TTTK…EVDS). Residues 214–224 (EGSQQQPSMTN) show a composition bias toward polar residues. Composition is skewed to acidic residues over residues 392 to 404 (TDID…DESD), 420 to 431 (SDDDDEEEEGEG), and 445 to 456 (EVEEGPTDEVDS).

Belongs to the peptidase M67A family. CSN5 subfamily. Component of the COP9 signalosome (CSN) complex.

The protein resides in the cytoplasm. It is found in the nucleus. Catalytic Component of the COP9 signalosome (CSN) complex that acts as an regulator of the ubiquitin (Ubl) conjugation pathway by mediating the deneddylation of the cullin subunit of SCF-type E3 ubiquitin-protein ligase complexes. The protein is COP9 signalosome complex subunit 5 (JAB1) of Candida albicans (strain SC5314 / ATCC MYA-2876) (Yeast).